We begin with the raw amino-acid sequence, 312 residues long: MPLSSRMPGLTCFEIFLAIAEAGSLGGAARELGLTQQAVSRRLASMEAQIGVRLAIRTTRGSQLTPAGIVVAEWAARLLEVADEIDAGLGSLRTEGRQRIRVVASQTIAEQLMPHWMLSLRAADMRRGGTVPEVILTATNSEHAIAAVRDGIADLGFIENPCPPTGLGSVVVARDELVVVVPPGHKWARRSRVVSARELAQTPLVTREPNSGIRDSLTAALRDTLGEDMQQAPPVLELSSAAAVRAAVLAGAGPAAMSRLAIADDLAFGRLLAVDIPALNLRRQLRAIWVGGRTPPAGAIRDLLSHITSRST.

Residues 8–65 (PGLTCFEIFLAIAEAGSLGGAARELGLTQQAVSRRLASMEAQIGVRLAIRTTRGSQLT) form the HTH lysR-type domain. Positions 25 to 45 (LGGAARELGLTQQAVSRRLAS) form a DNA-binding region, H-T-H motif.

It belongs to the LysR transcriptional regulatory family.

This is an uncharacterized protein from Mycobacterium tuberculosis (strain CDC 1551 / Oshkosh).